A 262-amino-acid polypeptide reads, in one-letter code: Iso-A82775C biosynthesis cluster protein B (262 aa).

Its function is as follows. Part of the gene cluster that mediates the biosynthesis of iso-A82775C, a enylepoxycyclohexane and biosynthetic precursor of the chloropestolide anticancer natural products. Within the cluster, the prenyltransferase iacE prenylates siccayne to generate pestalodiol E, using dimethylallyl diphosphate (DMAPP) as cosubstrate. The probable oxidoreductase iacF is then involved in the epoxidation of pestalodiol F to pestalodiol F, which is further converted to pestalofone A by the short-chain dehydrogenase/reductase iacG. Iso-A82775C is subsequently generated from pestalofone A by the short-chain dehydrogenase/reductase iacC. Iso-A82775C is further condensed with maldoxin via a Diels-Alder reaction to produce the anticancer natural products chloropestolides A to E. This Pestalotiopsis fici (strain W106-1 / CGMCC3.15140) protein is Iso-A82775C biosynthesis cluster protein B.